Reading from the N-terminus, the 432-residue chain is MSDKLPYKVADIGLAAWGRKALDIAENEMPGLMRMRERYSASKPLKGARIAGCLHMTVETAVLIETLVTLGAEVQWSSCNIFSTQDHAAAAIAKAGIPVYAWKGETDEEYLWCIEQTLYFKDGPLNMILDDGGDLTNLIHTKYPQLLPGIRGISEETTTGVHNLYKMMANGILKVPAINVNDSVTKSKFDNLYGCRESLIDGIKRATDVMIAGKVAVVAGYGDVGKGCAQALRGFGARVIITEIDPINALQAAMEGYEVTTMDEACQEGNIFVTTTGCIDIILGRHFEQMKDDAIVCNIGHFDVEIDVKWLNENAVEKVNIKPQVDRYRLKNGRRIILLAEGRLVNLGCAMGHPSFVMSNSFTNQVMAQIELWTHPDKYPVGVHFLPKKLDEAVAEAHLGKLNVKLTKLTEKQAQYLGMSCDGPFKPDHYRY.

The residue at position 2 (Ser-2) is an N-acetylserine. 3 residues coordinate substrate: Thr-57, Asp-131, and Glu-156. 157-159 (TTT) is an NAD(+) binding site. Ser-183 carries the post-translational modification Phosphoserine. Residues Lys-186 and Asp-190 each contribute to the substrate site. An N6-(2-hydroxyisobutyryl)lysine modification is found at Lys-186. A Phosphotyrosine modification is found at Tyr-193. NAD(+) is bound by residues 222–227 (GDVGKG), Glu-243, Asn-248, 299–301 (IGH), Asn-346, and His-353.

The protein belongs to the adenosylhomocysteinase family. Homotetramer. Interaction with AHCYL1. The cofactor is NAD(+).

It localises to the cytoplasm. The protein resides in the melanosome. Its subcellular location is the nucleus. The protein localises to the endoplasmic reticulum. It carries out the reaction S-adenosyl-L-homocysteine + H2O = L-homocysteine + adenosine. It functions in the pathway amino-acid biosynthesis; L-homocysteine biosynthesis; L-homocysteine from S-adenosyl-L-homocysteine: step 1/1. In terms of biological role, catalyzes the hydrolysis of S-adenosyl-L-homocysteine to form adenosine and homocysteine. Binds copper ions. The protein is Adenosylhomocysteinase (AHCY) of Homo sapiens (Human).